A 358-amino-acid chain; its full sequence is Serine/threonine-protein phosphatase 2A activator 2 (358 aa).

The protein belongs to the PTPA-type PPIase family.

It is found in the cytoplasm. It carries out the reaction [protein]-peptidylproline (omega=180) = [protein]-peptidylproline (omega=0). Its function is as follows. PPIases accelerate the folding of proteins. It catalyzes the cis-trans isomerization of proline imidic peptide bonds in oligopeptides. Acts as a regulatory subunit for PP2A-like phosphatases modulating their activity or substrate specificity, probably by inducing a conformational change in the catalytic subunit, a direct target of the PPIase. Can reactivate inactive phosphatase PP2A-phosphatase methylesterase complexes (PP2Ai) in presence of ATP and Mg(2+) by dissociating the inactive form from the complex. This Candida albicans (strain SC5314 / ATCC MYA-2876) (Yeast) protein is Serine/threonine-protein phosphatase 2A activator 2 (RRD2).